The primary structure comprises 119 residues: Evasin P983 (119 aa).

Residues Met-1–Ala-21 form the signal peptide. Cystine bridges form between Cys-37-Cys-59, Cys-55-Cys-97, Cys-72-Cys-102, and Cys-92-Cys-111. Asn-48 and Asn-67 each carry an N-linked (GlcNAc...) asparagine glycan.

The protein localises to the secreted. Salivary chemokine-binding protein which binds to host chemokines CCL2, CCL3 and CCL8. In Amblyomma cajennense (Cayenne tick), this protein is Evasin P983.